Consider the following 709-residue polypeptide: Cell adhesion molecule CEACAM3 (709 aa).

Positions 1 to 34 are cleaved as a signal peptide; sequence MELSSVLPCKRCTPWRGLLLTASLLTCWLLPTTA. 5 consecutive Ig-like V-type domains span residues 35–142, 155–262, 275–382, 393–500, and 509–616; these read QVSI…HVYF, QLSI…QVDT, QLTV…QVNT, LLTI…SVHT, and QLVI…HIYK. N-linked (GlcNAc...) asparagine glycans are attached at residues N73, N86, N103, N110, N133, N207, N224, N231, N327, N344, N351, N381, N462, N561, N578, and N585. In terms of domain architecture, Ig-like C2-type spans 631-695; sequence RVKSSVVLTC…YRCEVSNPVS (65 aa).

It belongs to the immunoglobulin superfamily. CEA family. In terms of tissue distribution, expression detected only in placenta.

Its function is as follows. Possibly involved in cell adhesion. The sequence is that of Cell adhesion molecule CEACAM3 from Rattus norvegicus (Rat).